Reading from the N-terminus, the 125-residue chain is MSTAVTEGIEVTVRSTFRPERSEPGRFLFSYSVRVVNQGEAPAQLVSRHWIIVDANGEREEVVGDGVVGQQPHLEPGEHFEYTSFCVLKTPHGSMRGTYRMVRDDGQAFDATIAPFPLVVPGSLN.

Residues 3–125 (TAVTEGIEVT…FPLVVPGSLN (123 aa)) form the ApaG domain.

This is Protein ApaG from Anaeromyxobacter dehalogenans (strain 2CP-C).